The chain runs to 239 residues: Small ribosomal subunit protein uS2 (239 aa).

Belongs to the universal ribosomal protein uS2 family.

This is Small ribosomal subunit protein uS2 from Francisella tularensis subsp. tularensis (strain FSC 198).